Consider the following 206-residue polypeptide: ATP phosphoribosyltransferase (206 aa).

This sequence belongs to the ATP phosphoribosyltransferase family. Short subfamily. In terms of assembly, heteromultimer composed of HisG and HisZ subunits.

It localises to the cytoplasm. The enzyme catalyses 1-(5-phospho-beta-D-ribosyl)-ATP + diphosphate = 5-phospho-alpha-D-ribose 1-diphosphate + ATP. Its pathway is amino-acid biosynthesis; L-histidine biosynthesis; L-histidine from 5-phospho-alpha-D-ribose 1-diphosphate: step 1/9. Its function is as follows. Catalyzes the condensation of ATP and 5-phosphoribose 1-diphosphate to form N'-(5'-phosphoribosyl)-ATP (PR-ATP). Has a crucial role in the pathway because the rate of histidine biosynthesis seems to be controlled primarily by regulation of HisG enzymatic activity. The chain is ATP phosphoribosyltransferase from Leptospira interrogans serogroup Icterohaemorrhagiae serovar copenhageni (strain Fiocruz L1-130).